Consider the following 629-residue polypeptide: Putrebactin synthase (629 aa).

The protein belongs to the IucA/IucC family. In terms of assembly, homodimer.

The catalysed reaction is 2 N-(3-carboxypropanoyl)-N-hydroxyputrescine + 2 ATP = putrebactin + 2 AMP + 2 diphosphate + 2 H(+). It catalyses the reaction 2 N-(3-carboxypropanoyl)-N-hydroxyputrescine + ATP = pre-putrebactin + AMP + diphosphate + H(+). It carries out the reaction pre-putrebactin + ATP = putrebactin + AMP + diphosphate + H(+). It functions in the pathway siderophore biosynthesis. With respect to regulation, requires Mg(2+) for activity. Functionally, ligase involved in the biosynthesis of the siderophore putrebactin. Catalyzes the ATP-dependent head-to-tail dimerization of N-hydroxy-N-succinyl-putrescine (HSP) to give pre-putrebactin and subsequent macrocyclization of pre-putrebactin to give putrebactin. The sequence is that of Putrebactin synthase from Shewanella sp. (strain MR-4).